We begin with the raw amino-acid sequence, 347 residues long: S-adenosylmethionine decarboxylase proenzyme 4 (347 aa).

Catalysis depends on residues Glu7 and Glu10. Glu66 lines the substrate pocket. Ser67 acts as the Schiff-base intermediate with substrate; via pyruvic acid in catalysis. Ser67 bears the Pyruvic acid (Ser); by autocatalysis mark. Cys81 (proton donor; for catalytic activity) is an active-site residue. Catalysis depends on proton acceptor; for processing activity residues Ser237 and His250. Glu254 is a substrate binding site.

This sequence belongs to the eukaryotic AdoMetDC family. Requires pyruvate as cofactor. Is synthesized initially as an inactive proenzyme. Formation of the active enzyme involves a self-maturation process in which the active site pyruvoyl group is generated from an internal serine residue via an autocatalytic post-translational modification. Two non-identical subunits are generated from the proenzyme in this reaction, and the pyruvate is formed at the N-terminus of the alpha chain, which is derived from the carboxyl end of the proenzyme. The post-translation cleavage follows an unusual pathway, termed non-hydrolytic serinolysis, in which the side chain hydroxyl group of the serine supplies its oxygen atom to form the C-terminus of the beta chain, while the remainder of the serine residue undergoes an oxidative deamination to produce ammonia and the pyruvoyl group blocking the N-terminus of the alpha chain.

It carries out the reaction S-adenosyl-L-methionine + H(+) = S-adenosyl 3-(methylsulfanyl)propylamine + CO2. It participates in amine and polyamine biosynthesis; S-adenosylmethioninamine biosynthesis; S-adenosylmethioninamine from S-adenosyl-L-methionine: step 1/1. In terms of biological role, essential for biosynthesis of the polyamines spermidine and spermine. Essential for polyamine homeostasis, and normal plant embryogenesis, growth and development. This is S-adenosylmethionine decarboxylase proenzyme 4 from Arabidopsis thaliana (Mouse-ear cress).